The chain runs to 436 residues: Serine hydroxymethyltransferase (436 aa).

(6S)-5,6,7,8-tetrahydrofolate contacts are provided by residues leucine 120 and 124-126 (GHL). Position 229 is an N6-(pyridoxal phosphate)lysine (lysine 229).

It belongs to the SHMT family. Homodimer. Requires pyridoxal 5'-phosphate as cofactor.

It localises to the cytoplasm. It carries out the reaction (6R)-5,10-methylene-5,6,7,8-tetrahydrofolate + glycine + H2O = (6S)-5,6,7,8-tetrahydrofolate + L-serine. It functions in the pathway one-carbon metabolism; tetrahydrofolate interconversion. Its pathway is amino-acid biosynthesis; glycine biosynthesis; glycine from L-serine: step 1/1. Functionally, catalyzes the reversible interconversion of serine and glycine with tetrahydrofolate (THF) serving as the one-carbon carrier. This reaction serves as the major source of one-carbon groups required for the biosynthesis of purines, thymidylate, methionine, and other important biomolecules. Also exhibits THF-independent aldolase activity toward beta-hydroxyamino acids, producing glycine and aldehydes, via a retro-aldol mechanism. The chain is Serine hydroxymethyltransferase from Roseiflexus castenholzii (strain DSM 13941 / HLO8).